Consider the following 319-residue polypeptide: Tyrosine--tRNA ligase (319 aa).

L-tyrosine is bound at residue Tyr35. The short motif at 40-48 is the 'HIGH' region element; it reads PSGKIHLGH. L-tyrosine-binding residues include Tyr156, Gln160, Asp163, and Gln178. The 'KMSKS' region motif lies at 213-217; sequence KMSSS. An ATP-binding site is contributed by Ser216.

Belongs to the class-I aminoacyl-tRNA synthetase family. TyrS type 3 subfamily. As to quaternary structure, homodimer.

The protein localises to the cytoplasm. The enzyme catalyses tRNA(Tyr) + L-tyrosine + ATP = L-tyrosyl-tRNA(Tyr) + AMP + diphosphate + H(+). Catalyzes the attachment of tyrosine to tRNA(Tyr) in a two-step reaction: tyrosine is first activated by ATP to form Tyr-AMP and then transferred to the acceptor end of tRNA(Tyr). This is Tyrosine--tRNA ligase from Methanobrevibacter smithii (strain ATCC 35061 / DSM 861 / OCM 144 / PS).